A 198-amino-acid chain; its full sequence is Holliday junction resolvase RecU (198 aa).

The tract at residues 1 to 22 (MVNYPHKVSSQKRQTSLSQPKN) is disordered. Over residues 11–22 (QKRQTSLSQPKN) the composition is skewed to polar residues. Thr-81, Asp-83, Glu-96, and Gln-115 together coordinate Mg(2+).

This sequence belongs to the RecU family. Requires Mg(2+) as cofactor.

The protein resides in the cytoplasm. The catalysed reaction is Endonucleolytic cleavage at a junction such as a reciprocal single-stranded crossover between two homologous DNA duplexes (Holliday junction).. Endonuclease that resolves Holliday junction intermediates in genetic recombination. Cleaves mobile four-strand junctions by introducing symmetrical nicks in paired strands. Promotes annealing of linear ssDNA with homologous dsDNA. Required for DNA repair, homologous recombination and chromosome segregation. The protein is Holliday junction resolvase RecU of Streptococcus pneumoniae serotype 2 (strain D39 / NCTC 7466).